The primary structure comprises 64 residues: Large ribosomal subunit protein bL35 (64 aa).

A compositionally biased stretch (polar residues) spans 1–10 (MPKMKTNSAA). Residues 1–64 (MPKMKTNSAA…AKKLHQLLQK (64 aa)) form a disordered region. Positions 54–64 (QAKKLHQLLQK) are enriched in basic residues.

This sequence belongs to the bacterial ribosomal protein bL35 family.

The polypeptide is Large ribosomal subunit protein bL35 (Bifidobacterium longum (strain NCC 2705)).